The sequence spans 1171 residues: ATP-dependent helicase/deoxyribonuclease subunit B (1171 aa).

The region spanning 1 to 343 (MSLRFVIGRA…LVAEENYRYR (343 aa)) is the UvrD-like helicase ATP-binding domain. 8 to 15 (GRAGSGKS) contacts ATP. One can recognise a UvrD-like helicase C-terminal domain in the interval 281 to 587 (MEQPRFHSPA…QFANIPPSLD (307 aa)). 4 residues coordinate [4Fe-4S] cluster: Cys805, Cys1129, Cys1132, and Cys1138.

This sequence belongs to the helicase family. AddB/RexB type 1 subfamily. Heterodimer of AddA and AddB. Mg(2+) is required as a cofactor. The cofactor is [4Fe-4S] cluster.

Its function is as follows. The heterodimer acts as both an ATP-dependent DNA helicase and an ATP-dependent, dual-direction single-stranded exonuclease. Recognizes the chi site generating a DNA molecule suitable for the initiation of homologous recombination. The AddB subunit has 5' -&gt; 3' nuclease activity but not helicase activity. The sequence is that of ATP-dependent helicase/deoxyribonuclease subunit B from Bacillus thuringiensis subsp. konkukian (strain 97-27).